The sequence spans 447 residues: Guanine nucleotide-binding protein alpha-1 subunit (447 aa).

Gly2 carries N-myristoyl glycine lipidation. Cys3 is lipidated: S-palmitoyl cysteine. A G-alpha domain is found at 40–447 (NEVKLLLLGA…QQNLKKSGIL (408 aa)). A G1 motif region spans residues 43–56 (KLLLLGAGESGKST). Glu51, Ser52, Gly53, Lys54, Ser55, Thr56, Leu269, Thr275, Gly297, Asn363, Lys364, Asp366, and Ala419 together coordinate GTP. Mg(2+) is bound at residue Ser55. The interval 267-275 (DILKGRIKT) is G2 motif. Thr275 contributes to the Mg(2+) binding site. The segment at 290-299 (FKVYDAGGQR) is G3 motif. Residues 359 to 366 (ILFLNKVD) form a G4 motif region. The G5 motif stretch occupies residues 417–422 (TCATDT).

This sequence belongs to the G-alpha family. As to quaternary structure, g proteins are composed of 3 units; alpha, beta and gamma. The alpha chain contains the guanine nucleotide binding site. Requires Mg(2+) as cofactor.

Guanine nucleotide-binding proteins (G proteins) are involved as modulators or transducers in various transmembrane signaling systems. This protein is involved in the mating response pathway. This is Guanine nucleotide-binding protein alpha-1 subunit (GPA1) from Kluyveromyces lactis (strain ATCC 8585 / CBS 2359 / DSM 70799 / NBRC 1267 / NRRL Y-1140 / WM37) (Yeast).